The following is an 87-amino-acid chain: Mitochondrial import protein 2 (87 aa).

At 1–53 (MADSEDTSVILQGIDTINSVEGLEEDGYLSDEDTSLSNELADAQRQWEESLQQ) the chain is on the cytoplasmic side. The helical transmembrane segment at 54-71 (LNKLLNWVLLPLLGKYIG) threads the bilayer. At 72-87 (RRMAKTLWSRFIEHFV) the chain is on the mitochondrial intermembrane side.

The protein belongs to the MIM2 family. Component of the MIM complex containing at least MIM1 and MIM2. Interacts with MIM1; interaction is direct.

It localises to the mitochondrion outer membrane. Component of the MIM complex required for outer membrane protein import. Involved in import of the subset of proteins with multiple alpha-helical transmembrane segments, including UGO1, TOM20 and FZO1. This chain is Mitochondrial import protein 2, found in Saccharomyces cerevisiae (strain ATCC 204508 / S288c) (Baker's yeast).